The chain runs to 533 residues: Probable galacturonosyltransferase 13 (533 aa).

Topologically, residues 1 to 40 are cytoplasmic; that stretch reads MQLHISPSMRSITISSSNEFIDLMKIKVAARHISYRTLFH. The helical; Signal-anchor for type II membrane protein transmembrane segment at 41-61 threads the bilayer; sequence TILILAFLLPFVFILTAVVTL. At 62–533 the chain is on the lumenal side; that stretch reads EGVNKCSSFD…DFIKNCHILE (472 aa). N-linked (GlcNAc...) asparagine glycosylation is found at Asn-306, Asn-396, Asn-445, and Asn-520.

Belongs to the glycosyltransferase 8 family. In terms of tissue distribution, expressed in roots, inflorescences, siliques, leaves and stems. Accumulates in pollen grains.

Its subcellular location is the golgi apparatus membrane. Its pathway is glycan metabolism; pectin biosynthesis. May be involved in pectin and/or xylans biosynthesis in cell walls. Together with GAUT14, required for pollen tube growth, possibly through the regulation of pectin biosynthesis and repartition in the pollen tube wall. The protein is Probable galacturonosyltransferase 13 of Arabidopsis thaliana (Mouse-ear cress).